The sequence spans 309 residues: tRNA N6-adenosine threonylcarbamoyltransferase (309 aa).

Fe cation-binding residues include histidine 108 and histidine 112. Substrate-binding positions include 130-134 (LVSGG), aspartate 163, glycine 176, aspartate 180, and asparagine 269. Aspartate 293 lines the Fe cation pocket.

It belongs to the KAE1 / TsaD family. Fe(2+) serves as cofactor.

The protein resides in the cytoplasm. It carries out the reaction L-threonylcarbamoyladenylate + adenosine(37) in tRNA = N(6)-L-threonylcarbamoyladenosine(37) in tRNA + AMP + H(+). In terms of biological role, required for the formation of a threonylcarbamoyl group on adenosine at position 37 (t(6)A37) in tRNAs that read codons beginning with adenine. Is involved in the transfer of the threonylcarbamoyl moiety of threonylcarbamoyl-AMP (TC-AMP) to the N6 group of A37, together with TsaE and TsaB. TsaD likely plays a direct catalytic role in this reaction. The chain is tRNA N6-adenosine threonylcarbamoyltransferase from Mycoplasmopsis agalactiae (strain NCTC 10123 / CIP 59.7 / PG2) (Mycoplasma agalactiae).